The chain runs to 315 residues: uncharacterized protein (315 aa).

This is an uncharacterized protein from Bos taurus (Bovine).